The following is a 309-amino-acid chain: General transcription factor IIH subunit 3 (309 aa).

Residues 269-286 (CSVCLSIFCNFSPICTTC) form a C4-type zinc finger.

Belongs to the TFB4 family. As to quaternary structure, part of a TFIID-containing RNA polymerase II pre-initiation complex that is composed of TBP and at least GTF2A1, GTF2A2, GTF2E1, GTF2E2, GTF2F1, GTF2H2, GTF2H3, GTF2H4, GTF2H5, GTF2B, TCEA1, ERCC2, ERCC3, TAF1, TAF2, TAF3, TAF4, TAF5, TAF6, TAF7, TAF8, TAF9, TAF10, TAF11, TAF12 and TAF13. Component of the 7-subunit TFIIH core complex composed of XPB/ERCC3, XPD/ERCC2, GTF2H1, GTF2H2, GTF2H3, GTF2H4 and GTF2H5, which is active in NER. The core complex associates with the 3-subunit CDK-activating kinase (CAK) module composed of CCNH/cyclin H, CDK7 and MNAT1 to form the 10-subunit holoenzyme (holo-TFIIH) active in transcription. Interacts with RARA; the interaction requires prior phosphorylation of RARA on 'Ser-369' which then enhances interaction of RARA with CDK7.

The protein resides in the nucleus. Component of the general transcription and DNA repair factor IIH (TFIIH) core complex, which is involved in general and transcription-coupled nucleotide excision repair (NER) of damaged DNA and, when complexed to CAK, in RNA transcription by RNA polymerase II. In NER, TFIIH acts by opening DNA around the lesion to allow the excision of the damaged oligonucleotide and its replacement by a new DNA fragment. In transcription, TFIIH has an essential role in transcription initiation. When the pre-initiation complex (PIC) has been established, TFIIH is required for promoter opening and promoter escape. Phosphorylation of the C-terminal tail (CTD) of the largest subunit of RNA polymerase II by the kinase module CAK controls the initiation of transcription. This is General transcription factor IIH subunit 3 (Gtf2h3) from Mus musculus (Mouse).